A 363-amino-acid chain; its full sequence is 3-dehydroquinate synthase (363 aa).

Residues 74-79 (DGEQYK), 108-112 (GVIGD), 132-133 (TT), lysine 145, lysine 154, and 172-175 (CLKT) contribute to the NAD(+) site. Glutamate 187, histidine 250, and histidine 267 together coordinate Zn(2+).

The protein belongs to the sugar phosphate cyclases superfamily. Dehydroquinate synthase family. Requires NAD(+) as cofactor. Co(2+) serves as cofactor. It depends on Zn(2+) as a cofactor.

The protein localises to the cytoplasm. It catalyses the reaction 7-phospho-2-dehydro-3-deoxy-D-arabino-heptonate = 3-dehydroquinate + phosphate. The protein operates within metabolic intermediate biosynthesis; chorismate biosynthesis; chorismate from D-erythrose 4-phosphate and phosphoenolpyruvate: step 2/7. In terms of biological role, catalyzes the conversion of 3-deoxy-D-arabino-heptulosonate 7-phosphate (DAHP) to dehydroquinate (DHQ). The sequence is that of 3-dehydroquinate synthase from Buchnera aphidicola subsp. Acyrthosiphon pisum (strain APS) (Acyrthosiphon pisum symbiotic bacterium).